The sequence spans 372 residues: Alanine dehydrogenase 1 (372 aa).

Residue His94 is part of the active site. Position 170 to 200 (170 to 200 (TYVIFGGGVAATNAANVALGLNAKVIIIELN)) interacts with NAD(+).

This sequence belongs to the AlaDH/PNT family.

The enzyme catalyses L-alanine + NAD(+) + H2O = pyruvate + NH4(+) + NADH + H(+). It functions in the pathway amino-acid degradation; L-alanine degradation via dehydrogenase pathway; NH(3) and pyruvate from L-alanine: step 1/1. In terms of biological role, may play a role in cell wall synthesis as L-alanine is an important constituent of the peptidoglycan layer. The polypeptide is Alanine dehydrogenase 1 (ald1) (Staphylococcus aureus (strain USA300)).